Consider the following 161-residue polypeptide: N5-carboxyaminoimidazole ribonucleotide mutase (161 aa).

Residues S9, D12, and R39 each contribute to the substrate site.

Belongs to the AIR carboxylase family. Class I subfamily.

It catalyses the reaction 5-carboxyamino-1-(5-phospho-D-ribosyl)imidazole + H(+) = 5-amino-1-(5-phospho-D-ribosyl)imidazole-4-carboxylate. Its pathway is purine metabolism; IMP biosynthesis via de novo pathway; 5-amino-1-(5-phospho-D-ribosyl)imidazole-4-carboxylate from 5-amino-1-(5-phospho-D-ribosyl)imidazole (N5-CAIR route): step 2/2. Its function is as follows. Catalyzes the conversion of N5-carboxyaminoimidazole ribonucleotide (N5-CAIR) to 4-carboxy-5-aminoimidazole ribonucleotide (CAIR). The protein is N5-carboxyaminoimidazole ribonucleotide mutase of Aliivibrio fischeri (strain ATCC 700601 / ES114) (Vibrio fischeri).